A 359-amino-acid chain; its full sequence is Insulin gene enhancer protein isl-2a (359 aa).

2 LIM zinc-binding domains span residues 27–80 (CVGC…CKRD) and 30–143 (CGSQ…RADH). The disordered stretch occupies residues 171 to 190 (EPVPVRQPPHRNHVHKQSEK). Positions 191–250 (TTRVRTVLNEKQLHTLRTCYNANPRPDALMKEQLVEMTGLSPRVIRVWFQNKRCKDKKKS) form a DNA-binding region, homeobox. Over residues 326 to 336 (ESGSLGNSSGS) the composition is skewed to low complexity. Residues 326–359 (ESGSLGNSSGSDVTSLSSQLPDTPNSMVPSPVET) are disordered. The span at 337-359 (DVTSLSSQLPDTPNSMVPSPVET) shows a compositional bias: polar residues.

Its subcellular location is the nucleus. Its function is as follows. Binds to one of the cis-acting domain of the insulin gene enhancer. May be involved in subtype specialization of primary motoneurons. In Danio rerio (Zebrafish), this protein is Insulin gene enhancer protein isl-2a (isl2a).